A 596-amino-acid chain; its full sequence is Mitoguardin 2 (596 aa).

2 helical membrane-spanning segments follow: residues 11–31 (IMQA…STFG) and 40–60 (LSPS…ALAL). Disordered regions lie at residues 67–158 (RRGR…AAWE) and 576–596 (ALPK…GQQD). The segment covering 110–123 (MSPSTRSNDTLSGV) has biased composition (polar residues). Over residues 124–140 (SSIAQSKHSSSSHSIAS) the composition is skewed to low complexity. 2 stretches are compositionally biased toward polar residues: residues 143–152 (VPSSPNQSVN) and 583–596 (QAES…GQQD).

The protein belongs to the mitoguardin family. Homodimer and heterodimer; forms heterodimers with miga1.

It is found in the mitochondrion outer membrane. Regulator of mitochondrial fusion: acts by forming homo- and heterodimers at the mitochondrial outer membrane and facilitating the formation of pld6/MitoPLD dimers. May act by regulating phospholipid metabolism via pld6/MitoPLD. This chain is Mitoguardin 2, found in Danio rerio (Zebrafish).